The following is a 266-amino-acid chain: MIQITVVQIDNYGPWTVTPNPRRESDLQALQSRLYCDMNLQFGAHRGLAFYTRFDNIIAITNGIDLETHKRIQNSVKNRYPFTVSMAVASAETAYEAQKLATETIQEYGSAQDDVRKEVLDVANEFVSNGYVQLAHVDINDITGKLTDLETAYDTYLSVQMTKLKLMEELKKYDSMGFFIGGDNFMCPCNGMSEKDFLCMFEDIRDSCGIDLKAGIGIGKTAEDASNLADIGLEVIREGKTDFQVYTLKQSIEERKDITYNYMCPI.

Belongs to the archaeal-type GTP cyclohydrolase family.

It catalyses the reaction GTP + 3 H2O = 2-amino-5-formylamino-6-(5-phospho-D-ribosylamino)pyrimidin-4(3H)-one + 2 phosphate + 2 H(+). Functionally, catalyzes the formation of 2-amino-5-formylamino-6-ribofuranosylamino-4(3H)-pyrimidinone ribonucleotide monophosphate and inorganic phosphate from GTP. Also has an independent pyrophosphate phosphohydrolase activity. The sequence is that of GTP cyclohydrolase III from Methanococcus maripaludis (strain C7 / ATCC BAA-1331).